A 49-amino-acid polypeptide reads, in one-letter code: Chitin-binding lectin (49 aa).

The Chitin-binding type-1 domain maps to 2–45; sequence DHRCGREATPPGKLCNDGRCCSQWGWCGTTQAYCSGKCQSQCDC. 4 disulfides stabilise this stretch: Cys5–Cys22, Cys16–Cys28, Cys21–Cys35, and Cys39–Cys43.

Homodimer; disulfide-linked.

Its function is as follows. Chitin-binding lectin which is specific for N-acetylglucosamine oligomers. In Viscum album (European mistletoe), this protein is Chitin-binding lectin.